The following is a 68-amino-acid chain: Adipokinetic prohormone type 1 (68 aa).

The N-terminal stretch at M1–A20 is a signal peptide. Q21 bears the Pyrrolidone carboxylic acid mark. Glycine amide is present on G30. Positions G34–P68 are excised as a propeptide.

As to expression, expressed in antennal lobe (AL), corpora cardiaca (CC), corpora allata (CA) and gnathal ganglion (GNG) (at protein level). Expression in CC and CA detected in all animals, expression in GNG in some animals and in AL in few animals (at protein level).

It localises to the secreted. Its function is as follows. This hormone, released from cells in the corpora cardiaca, causes release of diglycerides from the fat body and stimulation of muscles to use these diglycerides as an energy source during energy-demanding processes. The protein is Adipokinetic prohormone type 1 of Agrotis ipsilon (Black cutworm moth).